The chain runs to 212 residues: Thymidylate kinase (212 aa).

10–17 is an ATP binding site; it reads GPDGAGKS.

It belongs to the thymidylate kinase family.

It carries out the reaction dTMP + ATP = dTDP + ADP. Functionally, phosphorylation of dTMP to form dTDP in both de novo and salvage pathways of dTTP synthesis. This is Thymidylate kinase from Lactobacillus helveticus (strain DPC 4571).